The primary structure comprises 360 residues: 3-dehydroquinate synthase (360 aa).

Residues 105 to 109 (GVVGD), 129 to 130 (TT), K142, K151, and 169 to 172 (TLKT) each bind NAD(+). 3 residues coordinate Zn(2+): E184, H247, and H263.

This sequence belongs to the sugar phosphate cyclases superfamily. Dehydroquinate synthase family. It depends on Co(2+) as a cofactor. The cofactor is Zn(2+). NAD(+) is required as a cofactor.

The protein resides in the cytoplasm. It catalyses the reaction 7-phospho-2-dehydro-3-deoxy-D-arabino-heptonate = 3-dehydroquinate + phosphate. It functions in the pathway metabolic intermediate biosynthesis; chorismate biosynthesis; chorismate from D-erythrose 4-phosphate and phosphoenolpyruvate: step 2/7. Its function is as follows. Catalyzes the conversion of 3-deoxy-D-arabino-heptulosonate 7-phosphate (DAHP) to dehydroquinate (DHQ). This Acetivibrio thermocellus (strain ATCC 27405 / DSM 1237 / JCM 9322 / NBRC 103400 / NCIMB 10682 / NRRL B-4536 / VPI 7372) (Clostridium thermocellum) protein is 3-dehydroquinate synthase.